The chain runs to 370 residues: 5-hydroxytryptamine receptor 5B (370 aa).

Residues 1 to 36 (MEVSNLSGATPGLAFPPGPESCSDSPSSGRSMGSTP) form a disordered region. Residues 1–48 (MEVSNLSGATPGLAFPPGPESCSDSPSSGRSMGSTPGGLILPGREPPF) are Extracellular-facing. Residue N5 is glycosylated (N-linked (GlcNAc...) asparagine). Residues 20 to 36 (ESCSDSPSSGRSMGSTP) are compositionally biased toward low complexity. Residues 49–75 (SAFTVLVVTLLVLLIAATFLWNLLVLV) traverse the membrane as a helical segment. Residues 76–88 (TILRVRAFHRVPH) are Cytoplasmic-facing. Residues 89–115 (NLVASTAVSDVLVAVLVMPLSLVSELS) form a helical membrane-spanning segment. Residues 116–127 (AGRRWQLGRSLC) lie on the Extracellular side of the membrane. A disulfide bond links C127 and C205. Residues 128 to 150 (HVWISFDVLCCTASIWNVAAIAL) traverse the membrane as a helical segment. Residue D134 participates in serotonin binding. At 151–168 (DRYWTITRHLQYTLRTRS) the chain is on the cytoplasmic side. The chain crosses the membrane as a helical span at residues 169-189 (RASALMIAITWALSALIALAP). Residues 190 to 211 (LLFGWGEAYDARLQRCQVSQEP) are Extracellular-facing. Residues 212–233 (SYAVFSTCGAFYLPLAVVLFVY) form a helical membrane-spanning segment. Over 234–300 (WKIYKAAKFR…QKEKRAAMMV (67 aa)) the chain is Cytoplasmic. The helical transmembrane segment at 301–325 (GILIGVFVLCWIPFFLTELISPLCA) threads the bilayer. The Extracellular portion of the chain corresponds to 326–327 (CS). Residues 328–352 (LPPIWKSIFLWLGYSNSFFNPLIYT) form a helical membrane-spanning segment. Over 353–370 (AFNKNYNNAFKSLFTKQR) the chain is Cytoplasmic.

Belongs to the G-protein coupled receptor 1 family. Expressed predominantly in the central nervous system; in the hippocampus, habenula, and the doral raphe.

The protein resides in the cell membrane. Its function is as follows. G-protein coupled receptor for 5-hydroxytryptamine (serotonin), a biogenic hormone that functions as a neurotransmitter, a hormone and a mitogen. Also functions as a receptor for ergot alkaloid derivatives and other psychoactive substances. Ligand binding causes a conformation change that triggers signaling via guanine nucleotide-binding proteins (G proteins) and modulates the activity of downstream effectors. Htr5b is coupled to G(i)/G(o) G alpha proteins and mediates inhibitory neurotransmission: signaling inhibits adenylate cyclase activity and activates a phosphatidylinositol-calcium second messenger system that regulates the release of Ca(2+) ions from intracellular stores. In Mus musculus (Mouse), this protein is 5-hydroxytryptamine receptor 5B.